The following is a 380-amino-acid chain: Cytochrome b (380 aa).

Transmembrane regions (helical) follow at residues 34–54 (FGSLLGICLITQIATGLFLAM), 78–99 (WLVRNIHANGASFFFICIYLHI), 114–134 (WNIGVILLFLVMATAFVGYVL), and 179–199 (FFAFHFLFPFLIVGASILHLL). Heme b is bound by residues His84 and His98. The heme b site is built by His183 and His197. His202 contributes to the a ubiquinone binding site. 4 helical membrane passes run 227 to 247 (YKDTLGFLIMLMMLTLLSMLS), 289 to 309 (LGGVLALLASIMILMLIPMIH), 321 to 341 (MTQFLFWLMVSNTLILTWIGG), and 348 to 368 (FIEIGQAASILYFLLFIIFMP).

Belongs to the cytochrome b family. As to quaternary structure, the cytochrome bc1 complex contains 3 respiratory subunits (MT-CYB, CYC1 and UQCRFS1), 2 core proteins (UQCRC1 and UQCRC2) and probably 6 low-molecular weight proteins. Requires heme b as cofactor.

It localises to the mitochondrion inner membrane. Its function is as follows. Component of the ubiquinol-cytochrome c reductase complex (complex III or cytochrome b-c1 complex) that is part of the mitochondrial respiratory chain. The b-c1 complex mediates electron transfer from ubiquinol to cytochrome c. Contributes to the generation of a proton gradient across the mitochondrial membrane that is then used for ATP synthesis. The protein is Cytochrome b (mt-cyb) of Ranodon sibiricus (Siberian salamander).